The following is an 889-amino-acid chain: DNA gyrase subunit A (889 aa).

The Topo IIA-type catalytic domain maps to 35-501 (LPDVRDGLKP…GFEDLEDEDL (467 aa)). The active-site O-(5'-phospho-DNA)-tyrosine intermediate is the Y123. The short motif at 528–534 (QNRGGRG) is the GyrA-box element. The disordered stretch occupies residues 811–889 (KEDAEDETNE…IQQSLDEDEE (79 aa)). Residues 813–823 (DAEDETNEDEQ) show a composition bias toward acidic residues. Over residues 863-875 (DGRIEVRQDFMDR) the composition is skewed to basic and acidic residues. Over residues 876–889 (VEEDIQQSLDEDEE) the composition is skewed to acidic residues.

It belongs to the type II topoisomerase GyrA/ParC subunit family. Heterotetramer, composed of two GyrA and two GyrB chains. In the heterotetramer, GyrA contains the active site tyrosine that forms a transient covalent intermediate with DNA, while GyrB binds cofactors and catalyzes ATP hydrolysis.

Its subcellular location is the cytoplasm. The enzyme catalyses ATP-dependent breakage, passage and rejoining of double-stranded DNA.. A type II topoisomerase that negatively supercoils closed circular double-stranded (ds) DNA in an ATP-dependent manner to modulate DNA topology and maintain chromosomes in an underwound state. Negative supercoiling favors strand separation, and DNA replication, transcription, recombination and repair, all of which involve strand separation. Also able to catalyze the interconversion of other topological isomers of dsDNA rings, including catenanes and knotted rings. Type II topoisomerases break and join 2 DNA strands simultaneously in an ATP-dependent manner. In Staphylococcus aureus, this protein is DNA gyrase subunit A.